The following is a 647-amino-acid chain: Bifunctional enzyme CysN/CysC (647 aa).

A sulfate adenylyltransferase region spans residues 1-472 (MSHQSDLIAT…TEERAARFGQ (472 aa)). A tr-type G domain is found at 22–239 (KQLLRFITCG…LETVYIGSDR (218 aa)). The G1 stretch occupies residues 31-38 (GSVDDGKS). 31–38 (GSVDDGKS) provides a ligand contact to GTP. Residues 89–93 (GITID) are G2. The interval 110 to 113 (DTPG) is G3. GTP contacts are provided by residues 110–114 (DTPGH) and 165–168 (NKMD). The segment at 165–168 (NKMD) is G4. A G5 region spans residues 204-206 (SAL). The adenylyl-sulfate kinase stretch occupies residues 473–614 (KPATVLLTGL…FPGVTAKYDV (142 aa)). 481–488 (GLTGSGKT) is an ATP binding site.

It in the C-terminal section; belongs to the APS kinase family. In the N-terminal section; belongs to the TRAFAC class translation factor GTPase superfamily. Classic translation factor GTPase family. CysN/NodQ subfamily. Heterodimer composed of CysD, the smaller subunit, and CysNC.

It catalyses the reaction sulfate + ATP + H(+) = adenosine 5'-phosphosulfate + diphosphate. It carries out the reaction adenosine 5'-phosphosulfate + ATP = 3'-phosphoadenylyl sulfate + ADP + H(+). Its pathway is sulfur metabolism; hydrogen sulfide biosynthesis; sulfite from sulfate: step 1/3. The protein operates within sulfur metabolism; hydrogen sulfide biosynthesis; sulfite from sulfate: step 2/3. Its function is as follows. With CysD forms the ATP sulfurylase (ATPS) that catalyzes the adenylation of sulfate producing adenosine 5'-phosphosulfate (APS) and diphosphate, the first enzymatic step in sulfur assimilation pathway. APS synthesis involves the formation of a high-energy phosphoric-sulfuric acid anhydride bond driven by GTP hydrolysis by CysN coupled to ATP hydrolysis by CysD. APS kinase catalyzes the synthesis of activated sulfate. This chain is Bifunctional enzyme CysN/CysC (cysNC), found in Rhodopirellula baltica (strain DSM 10527 / NCIMB 13988 / SH1).